We begin with the raw amino-acid sequence, 116 residues long: SPbeta prophage-derived uncharacterized protein YoqA (116 aa).

This chain is SPbeta prophage-derived uncharacterized protein YoqA (yoqA), found in Bacillus subtilis (strain 168).